The chain runs to 113 residues: UPF0482 protein YnfB (113 aa).

Residues M1–A28 form the signal peptide.

The protein belongs to the UPF0482 family.

The polypeptide is UPF0482 protein YnfB (Shigella flexneri serotype 5b (strain 8401)).